The sequence spans 183 residues: ADP-ribosylation factor-like protein 5 (183 aa).

GTP contacts are provided by residues 27 to 34, 70 to 74, and 129 to 132; these read GLNAAGKT, DLGGQ, and NKQD.

The protein belongs to the small GTPase superfamily. Arf family.

In terms of biological role, may bind and exchange GTP and GDP. This is ADP-ribosylation factor-like protein 5 (arl5) from Dictyostelium discoideum (Social amoeba).